A 258-amino-acid polypeptide reads, in one-letter code: Very-long-chain aldehyde decarbonylase GL1-9 (258 aa).

The next 5 helical transmembrane spans lie at 13–33 (MGTF…QLVL), 63–83 (GVLL…MVTS), 88–108 (VVVQ…MLVM), 149–169 (PLEG…VSGM), and 175–195 (VFFF…LWLP). The Fatty acid hydroxylase domain maps to 101-237 (FLVAMLVMDS…FSIWDRILGT (137 aa)).

This sequence belongs to the sterol desaturase family. In terms of assembly, homodimer.

The protein resides in the endoplasmic reticulum membrane. The catalysed reaction is a long-chain fatty aldehyde + 2 NADPH + O2 + H(+) = a long-chain alkane + formate + 2 NADP(+) + H2O. Aldehyde decarbonylase involved in the conversion of aldehydes to alkanes. Core component of a very-long-chain alkane synthesis complex. In Oryza sativa subsp. indica (Rice), this protein is Very-long-chain aldehyde decarbonylase GL1-9.